Here is a 447-residue protein sequence, read N- to C-terminus: Protein O-GlcNAcase (447 aa).

A GH84 domain is found at 1-277 (MLTGVIEGFY…TTGAYLADPD (277 aa)). The a protein site is built by G8, K39, and D115. D116 functions as the Proton donor in the catalytic mechanism. A protein-binding positions include Y160, 219-221 (WDN), D226, and N254.

It belongs to the glycosyl hydrolase 84 family.

It carries out the reaction 3-O-(N-acetyl-beta-D-glucosaminyl)-L-seryl-[protein] + H2O = N-acetyl-D-glucosamine + L-seryl-[protein]. The catalysed reaction is 3-O-(N-acetyl-beta-D-glucosaminyl)-L-threonyl-[protein] + H2O = L-threonyl-[protein] + N-acetyl-D-glucosamine. Its activity is regulated as follows. Inhibited by PUGNac (O-(2-acetamido-2-deoxy-D-glucopyranosylidene)amino-N-phenylcarbamate). Functionally, cleaves GlcNAc from O-glycosylated proteins. Can use p-nitrophenyl-beta-GlcNAc and 4-methylumbelliferone-GlcNAc as substrate (in vitro). The sequence is that of Protein O-GlcNAcase from Oceanicola granulosus (strain ATCC BAA-861 / DSM 15982 / KCTC 12143 / HTCC2516).